We begin with the raw amino-acid sequence, 160 residues long: Nucleotide-binding protein CbuK_1936 (160 aa).

The protein belongs to the YajQ family.

In terms of biological role, nucleotide-binding protein. This chain is Nucleotide-binding protein CbuK_1936, found in Coxiella burnetii (strain CbuK_Q154) (Coxiella burnetii (strain Q154)).